The primary structure comprises 432 residues: Alpha-2 adrenergic receptor (432 aa).

The Extracellular portion of the chain corresponds to methionine 1 to isoleucine 32. Residues asparagine 5 and asparagine 18 are each glycosylated (N-linked (GlcNAc...) asparagine). The chain crosses the membrane as a helical span at residues alanine 33–valine 57. Over leucine 58–leucine 69 the chain is Cytoplasmic. The chain crosses the membrane as a helical span at residues phenylalanine 70–methionine 95. Residues glycine 96 to cysteine 105 lie on the Extracellular side of the membrane. A disulfide bridge links cysteine 105 with cysteine 183. The chain crosses the membrane as a helical span at residues glycine 106–leucine 128. Topologically, residues aspartate 129–valine 149 are cytoplasmic. The chain crosses the membrane as a helical span at residues lysine 150 to aspartate 172. At serine 173–aspartate 188 the chain is on the extracellular side. The helical transmembrane segment at threonine 189 to isoleucine 212 threads the bilayer. Residues arginine 213 to valine 356 lie on the Cytoplasmic side of the membrane. The segment at threonine 222–serine 319 is disordered. 2 stretches are compositionally biased toward polar residues: residues valine 235–asparagine 246 and serine 265–threonine 275. A compositionally biased stretch (basic and acidic residues) spans glycine 288–arginine 300. Residues serine 309 to serine 319 show a composition bias toward polar residues. The helical transmembrane segment at leucine 357–valine 380 threads the bilayer. Topologically, residues cysteine 381–lysine 393 are extracellular. Residues phenylalanine 394–asparagine 413 form a helical membrane-spanning segment. The Cytoplasmic segment spans residues arginine 414–phenylalanine 432.

The protein belongs to the G-protein coupled receptor 1 family.

The protein localises to the cell membrane. Alpha-2 adrenergic receptors mediate the catecholamine-induced inhibition of adenylate cyclase through the action of G proteins. In Labrus ossifagus (Cuckoo wrasse), this protein is Alpha-2 adrenergic receptor.